We begin with the raw amino-acid sequence, 337 residues long: AP2/ERF and B3 domain-containing transcription factor At1g50680 (337 aa).

Positions Lys27–Pro84 form a DNA-binding region, AP2/ERF. A DNA-binding region (TF-B3) is located at residues Phe157 to Asn271.

Belongs to the AP2/ERF transcription factor family. RAV subfamily.

The protein localises to the nucleus. Its function is as follows. Probably acts as a transcriptional activator. Binds to the GCC-box pathogenesis-related promoter element. May be involved in the regulation of gene expression by stress factors and by components of stress signal transduction pathways. This is AP2/ERF and B3 domain-containing transcription factor At1g50680 from Arabidopsis thaliana (Mouse-ear cress).